A 383-amino-acid polypeptide reads, in one-letter code: tRNA (guanine(26)-N(2))-dimethyltransferase (383 aa).

The 368-residue stretch at 4–371 folds into the Trm1 methyltransferase domain; it reads EIITEGRTPL…ASPEEFEAVL (368 aa). Positions 38, 63, 80, 108, and 109 each coordinate S-adenosyl-L-methionine. Residues Cys-243, Cys-246, Cys-258, and Cys-261 each contribute to the Zn(2+) site.

Belongs to the class I-like SAM-binding methyltransferase superfamily. Trm1 family.

It catalyses the reaction guanosine(26) in tRNA + 2 S-adenosyl-L-methionine = N(2)-dimethylguanosine(26) in tRNA + 2 S-adenosyl-L-homocysteine + 2 H(+). Dimethylates a single guanine residue at position 26 of a number of tRNAs using S-adenosyl-L-methionine as donor of the methyl groups. The polypeptide is tRNA (guanine(26)-N(2))-dimethyltransferase (Methanopyrus kandleri (strain AV19 / DSM 6324 / JCM 9639 / NBRC 100938)).